The sequence spans 380 residues: SAM and SH3 domain-containing protein 3 (380 aa).

Residues 1–76 (MLRRKPSNAS…KSGKKLGKKW (76 aa)) are disordered. Residues 22–41 (LQRSSSFKDFAKSKPSSPVV) are compositionally biased toward low complexity. 3 positions are modified to phosphoserine: Ser27, Ser34, and Ser42. Thr61 bears the Phosphothreonine mark. Ser97 is modified (phosphoserine). Disordered stretches follow at residues 98 to 174 (EEMA…TGPF), 237 to 256 (VGHA…KPKT), and 318 to 380 (TGSE…AGAP). The residue at position 103 (Thr103) is a Phosphothreonine. Phosphoserine is present on Ser110. Position 112 is a phosphothreonine (Thr112). Ser113 carries the phosphoserine modification. A Phosphotyrosine modification is found at Tyr116. Ser120 is modified (phosphoserine). A compositionally biased stretch (polar residues) spans 143 to 152 (RQASTGSELC). The segment covering 153 to 164 (SPSPGSGSFGEE) has biased composition (low complexity). The SH3 domain maps to 173-234 (PFCGRARVHT…KFIYVDVLPE (62 aa)). Basic residues predominate over residues 241–255 (RPSRRQSKGKRPKPK). Positions 252-316 (PKPKTLHELL…LTAAELLLDY (65 aa)) constitute an SAM domain. At Thr318 the chain carries Phosphothreonine. The segment covering 318-327 (TGSEEAEEGA) has biased composition (acidic residues). At Ser320 the chain carries Phosphoserine.

Its function is as follows. May function as a signaling adapter protein in lymphocytes. The protein is SAM and SH3 domain-containing protein 3 (SASH3) of Homo sapiens (Human).